The chain runs to 272 residues: ATP phosphoribosyltransferase regulatory subunit (272 aa).

The protein belongs to the class-II aminoacyl-tRNA synthetase family. HisZ subfamily. Heteromultimer composed of HisG and HisZ subunits.

The protein resides in the cytoplasm. It functions in the pathway amino-acid biosynthesis; L-histidine biosynthesis; L-histidine from 5-phospho-alpha-D-ribose 1-diphosphate: step 1/9. Functionally, required for the first step of histidine biosynthesis. May allow the feedback regulation of ATP phosphoribosyltransferase activity by histidine. The sequence is that of ATP phosphoribosyltransferase regulatory subunit from Staphylococcus aureus (strain Mu3 / ATCC 700698).